The following is a 576-amino-acid chain: MRYTQFFIPTLKETPSDAEVVSHQLMMRSGMIRKIAAGIYTYMPLGLRSIRKFEQIVREEMNRAGAIELLMPGVQPAELWIESKRWAQYGKELLRFKDRKDNEFCMGPTHEEIITDIARREVKSYRQMPVNFYQIQTKFRDEIRPRFGLMRGREFIMKDAYSFDVDSSAADLSYDKMYQAYNRIFERCGLNFRAVEADTGSIGGSASHEFMVLASSGEDAIVSCNACRYAANVEKAEGVRQQQGGAGQQALTKVHTPDKKTIAEVAEFLGLPQSGTVKALVLSNGEGQFVMALVRGDHELNELKLKNRLGWDEIQMATDDEILRFTGSPPGFLGPLGLKAELQVVADYAVETMADFVIGANETDQHYTGANTGRDFQISQIADIRLIGAGDPCPRCSGGTLEVWRGIEVGHVFKLGTKYSSSMNATYLDKDGKEQIIFMGCYGIGIGRTVAASIEQNHDENGVIWPLPLAPFHCSVVAINAQKDEAVMAAAQDIHDRLEAAGVEVLLDDRDERPGVKFKDHDLIGIPLRIVVGGKNLAEGNVEFKQRAGGEMQLLAPEQAIESVIAKVRESCGGSR.

Belongs to the class-II aminoacyl-tRNA synthetase family. ProS type 1 subfamily. As to quaternary structure, homodimer.

The protein localises to the cytoplasm. The enzyme catalyses tRNA(Pro) + L-proline + ATP = L-prolyl-tRNA(Pro) + AMP + diphosphate. In terms of biological role, catalyzes the attachment of proline to tRNA(Pro) in a two-step reaction: proline is first activated by ATP to form Pro-AMP and then transferred to the acceptor end of tRNA(Pro). As ProRS can inadvertently accommodate and process non-cognate amino acids such as alanine and cysteine, to avoid such errors it has two additional distinct editing activities against alanine. One activity is designated as 'pretransfer' editing and involves the tRNA(Pro)-independent hydrolysis of activated Ala-AMP. The other activity is designated 'posttransfer' editing and involves deacylation of mischarged Ala-tRNA(Pro). The misacylated Cys-tRNA(Pro) is not edited by ProRS. In Trichlorobacter lovleyi (strain ATCC BAA-1151 / DSM 17278 / SZ) (Geobacter lovleyi), this protein is Proline--tRNA ligase.